The chain runs to 407 residues: Tryptophan synthase beta chain (407 aa).

N6-(pyridoxal phosphate)lysine is present on Lys-91.

It belongs to the TrpB family. As to quaternary structure, tetramer of two alpha and two beta chains. Requires pyridoxal 5'-phosphate as cofactor.

The enzyme catalyses (1S,2R)-1-C-(indol-3-yl)glycerol 3-phosphate + L-serine = D-glyceraldehyde 3-phosphate + L-tryptophan + H2O. It functions in the pathway amino-acid biosynthesis; L-tryptophan biosynthesis; L-tryptophan from chorismate: step 5/5. The beta subunit is responsible for the synthesis of L-tryptophan from indole and L-serine. The protein is Tryptophan synthase beta chain of Streptococcus pneumoniae (strain JJA).